Consider the following 168-residue polypeptide: MAENRRNDREQSEFEERVVSINRVTKVVKGGRRLRFAALVVVGDRNGRVGFGTGKAQEVPEAIRKAIEAAKKNLITVPMVGTTLPHEALGVFGGGKILLKPAVEGAGVAAGGAVRAVLELAGVADVTSKSLGSNTPINVVRATVDGLTQLKRAEEVAALRGKSVSDFA.

One can recognise an S5 DRBM domain in the interval 14 to 77; that stretch reads FEERVVSINR…EAAKKNLITV (64 aa).

Belongs to the universal ribosomal protein uS5 family. In terms of assembly, part of the 30S ribosomal subunit. Contacts proteins S4 and S8.

In terms of biological role, with S4 and S12 plays an important role in translational accuracy. Functionally, located at the back of the 30S subunit body where it stabilizes the conformation of the head with respect to the body. This is Small ribosomal subunit protein uS5 from Lactococcus lactis subsp. cremoris (strain MG1363).